The following is a 391-amino-acid chain: Elongation factor Tu (391 aa).

The tr-type G domain maps to 10–201 (KPHVNIGTIG…AVDEYIPTPA (192 aa)). Residues 19-26 (GHVDHGKT) form a G1 region. Position 19–26 (19–26 (GHVDHGKT)) interacts with GTP. Thr26 contributes to the Mg(2+) binding site. Positions 55 to 59 (GITIS) are G2. The segment at 76-79 (DCPG) is G3. GTP is bound by residues 76–80 (DCPGH) and 131–134 (NKVD). The tract at residues 131–134 (NKVD) is G4. The interval 169-171 (SAL) is G5.

The protein belongs to the TRAFAC class translation factor GTPase superfamily. Classic translation factor GTPase family. EF-Tu/EF-1A subfamily. In terms of assembly, monomer.

Its subcellular location is the cytoplasm. It carries out the reaction GTP + H2O = GDP + phosphate + H(+). GTP hydrolase that promotes the GTP-dependent binding of aminoacyl-tRNA to the A-site of ribosomes during protein biosynthesis. The chain is Elongation factor Tu from Jannaschia sp. (strain CCS1).